The sequence spans 119 residues: Small polypeptide DEVIL 24 (119 aa).

Residues S83 to T114 are required for DVL/RTFL small polypeptide activity. A helical membrane pass occupies residues H96–Y113.

Belongs to the DVL/RTFL small polypeptides family.

The protein localises to the cell membrane. Small polypeptide acting as a regulatory molecule which coordinates cellular responses required for differentiation, growth and development, probably by restricting polar cell proliferation in lateral organs and coordinating socket cell recruitment and differentiation at trichome sites. The polypeptide is Small polypeptide DEVIL 24 (Arabidopsis thaliana (Mouse-ear cress)).